The chain runs to 134 residues: Large ribosomal subunit protein uL16c (134 aa).

The interval 1–22 (MLSPKRTRFRKQHRGRMKGISH) is disordered.

Belongs to the universal ribosomal protein uL16 family. Part of the 50S ribosomal subunit.

The protein localises to the plastid. It localises to the chloroplast. The polypeptide is Large ribosomal subunit protein uL16c (Nicotiana tabacum (Common tobacco)).